The following is a 499-amino-acid chain: 3-beta-hydroxylase (499 aa).

The chain crosses the membrane as a helical; Signal-anchor for type II membrane protein span at residues 2 to 22 (FSSFETLILSFVSLFFMMIFI). C441 contributes to the heme binding site.

It belongs to the cytochrome P450 family. The cofactor is heme.

It is found in the membrane. The enzyme catalyses (+)-costunolide + reduced [NADPH--hemoprotein reductase] + O2 = 3beta-hydroxycostunolide + oxidized [NADPH--hemoprotein reductase] + H2O + H(+). The catalysed reaction is parthenolide + reduced [NADPH--hemoprotein reductase] + O2 = 3beta-hydroxyparthenolide + oxidized [NADPH--hemoprotein reductase] + H2O + H(+). Its pathway is secondary metabolite biosynthesis; terpenoid biosynthesis. In terms of biological role, involved in the biosynthesis of germacrene-derived sesquiterpene lactones. Component of the parthenolide biosynthetic pathway; parthenolide and conjugates are promising anti-cancer drugs highly active against colon cancer cells. Catalyzes the conversion of costunolide and parthenolide to 3-beta-hydroxycostunolide and 3-beta-hydroxyparthenolide, respectively. The sequence is that of 3-beta-hydroxylase from Tanacetum parthenium (Feverfew).